The following is a 4083-amino-acid chain: Dynein axonemal heavy chain 3 (4083 aa).

2 disordered regions span residues 1-37 and 111-132; these read MSDT…VSAN and DKTS…PSKK. Positions 1-1357 are stem; sequence MSDTNCSAQK…HVQMITTEAL (1357 aa). Coiled coils occupy residues 1026–1052 and 1108–1133; these read IKPI…AWLK and RMTE…YLEK. AAA regions lie at residues 1358-1579, 1639-1870, 2003-2251, and 2362-2613; these read YGYE…VLTA, EALN…LHCK, TIPA…VIQG, and EFNS…LLRH. ATP contacts are provided by residues 1396 to 1403, 1677 to 1684, 2041 to 2048, and 2401 to 2408; these read GPAGTGKT, GDPMGGKT, GPTGTGKS, and GIGGSGRQ. The interval 2628–2927 is stalk; that stretch reads FKTLLNSKRQ…NSLEKNIEIC (300 aa). The stretch at 2651–2714 forms a coiled coil; sequence QKLEFASSQV…DEKEANAAAA (64 aa). 2 AAA regions span residues 3012–3242 and 3455–3679; these read LGDP…EISE and IQNF…QIQM.

This sequence belongs to the dynein heavy chain family. Consists of at least two heavy chains and a number of intermediate and light chains.

The protein localises to the cytoplasm. It localises to the cytoskeleton. The protein resides in the cilium axoneme. Its function is as follows. Force generating protein of respiratory cilia. Produces force towards the minus ends of microtubules. Dynein has ATPase activity; the force-producing power stroke is thought to occur on release of ADP. Involved in sperm motility; implicated in sperm flagellar assembly. The protein is Dynein axonemal heavy chain 3 (Dnah3) of Mus musculus (Mouse).